Reading from the N-terminus, the 445-residue chain is Proline--tRNA ligase (445 aa).

This sequence belongs to the class-II aminoacyl-tRNA synthetase family. ProS type 2 subfamily. In terms of assembly, homodimer.

It is found in the cytoplasm. It carries out the reaction tRNA(Pro) + L-proline + ATP = L-prolyl-tRNA(Pro) + AMP + diphosphate. In terms of biological role, catalyzes the attachment of proline to tRNA(Pro) in a two-step reaction: proline is first activated by ATP to form Pro-AMP and then transferred to the acceptor end of tRNA(Pro). The polypeptide is Proline--tRNA ligase (Dinoroseobacter shibae (strain DSM 16493 / NCIMB 14021 / DFL 12)).